We begin with the raw amino-acid sequence, 577 residues long: Arginine--tRNA ligase (577 aa).

The 'HIGH' region signature appears at 122 to 132; sequence PNVAKEMHVGH.

Belongs to the class-I aminoacyl-tRNA synthetase family. As to quaternary structure, monomer.

The protein resides in the cytoplasm. It catalyses the reaction tRNA(Arg) + L-arginine + ATP = L-arginyl-tRNA(Arg) + AMP + diphosphate. This Klebsiella pneumoniae subsp. pneumoniae (strain ATCC 700721 / MGH 78578) protein is Arginine--tRNA ligase.